A 247-amino-acid polypeptide reads, in one-letter code: Uridylate kinase (247 aa).

16 to 19 (KLSG) lines the ATP pocket. Gly-58 contacts UMP. ATP contacts are provided by Gly-59 and Arg-63. Residues Asp-78 and 139–146 (TGNPFFTT) contribute to the UMP site. ATP is bound by residues Thr-166, Tyr-172, and Asp-175.

Belongs to the UMP kinase family. Homohexamer.

The protein resides in the cytoplasm. The enzyme catalyses UMP + ATP = UDP + ADP. The protein operates within pyrimidine metabolism; CTP biosynthesis via de novo pathway; UDP from UMP (UMPK route): step 1/1. Its activity is regulated as follows. Inhibited by UTP. Catalyzes the reversible phosphorylation of UMP to UDP. The sequence is that of Uridylate kinase from Xylella fastidiosa (strain 9a5c).